The following is a 732-amino-acid chain: MAP7 domain-containing protein 2 (732 aa).

M1 carries the post-translational modification N-acetylmethionine. The span at M1–T10 shows a compositional bias: gly residues. Disordered regions lie at residues M1–E64, W95–E123, P157–S186, G210–A244, and E279–E509. Over residues L49–E64 the composition is skewed to basic and acidic residues. Positions S51–K146 form a coiled coil. Over residues M329–G345 the composition is skewed to basic and acidic residues. Over residues L347–E357 the composition is skewed to low complexity. Residues A359 to A374 are compositionally biased toward basic and acidic residues. The segment covering A375–A386 has biased composition (low complexity). Positions L404–E509 are enriched in basic and acidic residues.

It belongs to the MAP7 family. As to quaternary structure, interacts (via N-terminus) with microtubules; facilitates microtubule stabilization. Interacts with kinesin-1 family members, KIF5A, KIF5B and KIF5C.

It is found in the cytoplasm. Its subcellular location is the cytoskeleton. It localises to the microtubule organizing center. The protein localises to the centrosome. The protein resides in the midbody. It is found in the cell projection. Its subcellular location is the neuron projection. It localises to the axon. Microtubule-stabilizing protein that plays a role in the control of cell motility and neurite outgrowth via direct binding to the microtubule. Acts as a critical cofactor for kinesin transport. In the proximal axon, regulates kinesin-1 family members, KIF5A, KIF5B and KIF5C recruitment to microtubules and contributes to kinesin-1-mediated transport in the axons. This chain is MAP7 domain-containing protein 2 (MAP7D2), found in Homo sapiens (Human).